Here is a 303-residue protein sequence, read N- to C-terminus: Quinolinate synthase (303 aa).

2 residues coordinate iminosuccinate: His-24 and Ser-41. Cys-86 contacts [4Fe-4S] cluster. Residues 112-114 (YIN) and Ser-129 contribute to the iminosuccinate site. Position 172 (Cys-172) interacts with [4Fe-4S] cluster. Iminosuccinate contacts are provided by residues 198 to 200 (HPE) and Thr-215. [4Fe-4S] cluster is bound at residue Cys-260.

The protein belongs to the quinolinate synthase family. Type 2 subfamily. [4Fe-4S] cluster serves as cofactor.

It is found in the cytoplasm. It catalyses the reaction iminosuccinate + dihydroxyacetone phosphate = quinolinate + phosphate + 2 H2O + H(+). It functions in the pathway cofactor biosynthesis; NAD(+) biosynthesis; quinolinate from iminoaspartate: step 1/1. Its function is as follows. Catalyzes the condensation of iminoaspartate with dihydroxyacetone phosphate to form quinolinate. This chain is Quinolinate synthase, found in Caldicellulosiruptor bescii (strain ATCC BAA-1888 / DSM 6725 / KCTC 15123 / Z-1320) (Anaerocellum thermophilum).